The chain runs to 144 residues: Large ribosomal subunit protein uL13 (144 aa).

This sequence belongs to the universal ribosomal protein uL13 family. As to quaternary structure, part of the 50S ribosomal subunit.

Its function is as follows. This protein is one of the early assembly proteins of the 50S ribosomal subunit, although it is not seen to bind rRNA by itself. It is important during the early stages of 50S assembly. The protein is Large ribosomal subunit protein uL13 of Mycoplasmopsis synoviae (strain 53) (Mycoplasma synoviae).